A 372-amino-acid chain; its full sequence is Alanine racemase (372 aa).

Lys37 serves as the catalytic Proton acceptor; specific for D-alanine. Lys37 is subject to N6-(pyridoxal phosphate)lysine. Arg136 is a substrate binding site. Catalysis depends on Tyr265, which acts as the Proton acceptor; specific for L-alanine. Met313 is a binding site for substrate.

It belongs to the alanine racemase family. Pyridoxal 5'-phosphate serves as cofactor.

The enzyme catalyses L-alanine = D-alanine. It functions in the pathway amino-acid biosynthesis; D-alanine biosynthesis; D-alanine from L-alanine: step 1/1. Functionally, catalyzes the interconversion of L-alanine and D-alanine. May also act on other amino acids. The chain is Alanine racemase (alr) from Synechocystis sp. (strain ATCC 27184 / PCC 6803 / Kazusa).